Reading from the N-terminus, the 251-residue chain is Triosephosphate isomerase, glycosomal (251 aa).

The substrate site is built by asparagine 12 and lysine 14. The active-site Electrophile is histidine 96. Catalysis depends on glutamate 168, which acts as the Proton acceptor.

It belongs to the triosephosphate isomerase family. Homodimer.

The protein resides in the glycosome. The enzyme catalyses D-glyceraldehyde 3-phosphate = dihydroxyacetone phosphate. Its pathway is carbohydrate biosynthesis; gluconeogenesis. The protein operates within carbohydrate degradation; glycolysis; D-glyceraldehyde 3-phosphate from glycerone phosphate: step 1/1. The sequence is that of Triosephosphate isomerase, glycosomal from Trypanosoma cruzi.